A 525-amino-acid chain; its full sequence is Protein translocase subunit SecD (525 aa).

A run of 6 helical transmembrane segments spans residues 9–29 (LYLV…SLLG), 368–388 (VLIG…GFGM), 392–412 (LAVV…QATL), 415–435 (PGIA…VLIF), 460–480 (FSTI…LYQF), and 487–507 (GFAV…IFVT).

This sequence belongs to the SecD/SecF family. SecD subfamily. Forms a complex with SecF. Part of the essential Sec protein translocation apparatus which comprises SecA, SecYEG and auxiliary proteins SecDF-YajC and YidC.

It localises to the cell inner membrane. Its function is as follows. Part of the Sec protein translocase complex. Interacts with the SecYEG preprotein conducting channel. SecDF uses the proton motive force (PMF) to complete protein translocation after the ATP-dependent function of SecA. This is Protein translocase subunit SecD from Magnetococcus marinus (strain ATCC BAA-1437 / JCM 17883 / MC-1).